Here is a 222-residue protein sequence, read N- to C-terminus: Protein-L-isoaspartate O-methyltransferase (222 aa).

Ser-69 is a catalytic residue.

The protein belongs to the methyltransferase superfamily. L-isoaspartyl/D-aspartyl protein methyltransferase family.

It is found in the cytoplasm. The enzyme catalyses [protein]-L-isoaspartate + S-adenosyl-L-methionine = [protein]-L-isoaspartate alpha-methyl ester + S-adenosyl-L-homocysteine. Its function is as follows. Catalyzes the methyl esterification of L-isoaspartyl residues in peptides and proteins that result from spontaneous decomposition of normal L-aspartyl and L-asparaginyl residues. It plays a role in the repair and/or degradation of damaged proteins. This chain is Protein-L-isoaspartate O-methyltransferase, found in Nitrosomonas europaea (strain ATCC 19718 / CIP 103999 / KCTC 2705 / NBRC 14298).